The sequence spans 308 residues: Testis-expressed protein 52 (308 aa).

In terms of tissue distribution, expressed in Testis.

This Mus musculus (Mouse) protein is Testis-expressed protein 52.